A 250-amino-acid polypeptide reads, in one-letter code: ATP synthase subunit a (250 aa).

Helical transmembrane passes span 26-46, 84-104, 114-134, 143-163, 193-213, and 216-236; these read FTNA…FLYF, FFPL…LGMF, IIVT…YGFY, VFVP…IEII, FVAS…LPLI, and VALT…FAVL.

The protein belongs to the ATPase A chain family. F-type ATPases have 2 components, CF(1) - the catalytic core - and CF(0) - the membrane proton channel. CF(1) has five subunits: alpha(3), beta(3), gamma(1), delta(1), epsilon(1). CF(0) has three main subunits: a(1), b(2) and c(9-12). The alpha and beta chains form an alternating ring which encloses part of the gamma chain. CF(1) is attached to CF(0) by a central stalk formed by the gamma and epsilon chains, while a peripheral stalk is formed by the delta and b chains.

It is found in the cell inner membrane. Functionally, key component of the proton channel; it plays a direct role in the translocation of protons across the membrane. The protein is ATP synthase subunit a of Rhizobium etli (strain ATCC 51251 / DSM 11541 / JCM 21823 / NBRC 15573 / CFN 42).